A 200-amino-acid polypeptide reads, in one-letter code: Dephospho-CoA kinase (200 aa).

The 197-residue stretch at 4–200 folds into the DPCK domain; the sequence is TIGLTGSVAT…TFIKRFVKNK (197 aa). Residue 12–17 coordinates ATP; it reads ATGKST.

This sequence belongs to the CoaE family.

Its subcellular location is the cytoplasm. The enzyme catalyses 3'-dephospho-CoA + ATP = ADP + CoA + H(+). It functions in the pathway cofactor biosynthesis; coenzyme A biosynthesis; CoA from (R)-pantothenate: step 5/5. Catalyzes the phosphorylation of the 3'-hydroxyl group of dephosphocoenzyme A to form coenzyme A. The chain is Dephospho-CoA kinase from Listeria monocytogenes serotype 4b (strain F2365).